We begin with the raw amino-acid sequence, 245 residues long: Superoxide dismutase [Mn], mitochondrial (245 aa).

The N-terminal 32 residues, Met-1 to Ala-32, are a transit peptide targeting the mitochondrion. Mn(2+) is bound by residues His-58, His-106, Asp-196, and His-200.

Belongs to the iron/manganese superoxide dismutase family. In terms of assembly, homotetramer. Mn(2+) is required as a cofactor.

Its subcellular location is the mitochondrion matrix. It catalyses the reaction 2 superoxide + 2 H(+) = H2O2 + O2. Its function is as follows. Destroys superoxide anion radicals which are normally produced within the cells and which are toxic to biological systems. The chain is Superoxide dismutase [Mn], mitochondrial (sod-2) from Neurospora crassa (strain ATCC 24698 / 74-OR23-1A / CBS 708.71 / DSM 1257 / FGSC 987).